The following is a 493-amino-acid chain: Lysine--tRNA ligase (493 aa).

Residues Glu404 and Glu411 each coordinate Mg(2+).

The protein belongs to the class-II aminoacyl-tRNA synthetase family. As to quaternary structure, homodimer. Requires Mg(2+) as cofactor.

The protein localises to the cytoplasm. The enzyme catalyses tRNA(Lys) + L-lysine + ATP = L-lysyl-tRNA(Lys) + AMP + diphosphate. This chain is Lysine--tRNA ligase, found in Oceanobacillus iheyensis (strain DSM 14371 / CIP 107618 / JCM 11309 / KCTC 3954 / HTE831).